The chain runs to 364 residues: Aminomethyltransferase (364 aa).

Belongs to the GcvT family. As to quaternary structure, the glycine cleavage system is composed of four proteins: P, T, L and H.

The enzyme catalyses N(6)-[(R)-S(8)-aminomethyldihydrolipoyl]-L-lysyl-[protein] + (6S)-5,6,7,8-tetrahydrofolate = N(6)-[(R)-dihydrolipoyl]-L-lysyl-[protein] + (6R)-5,10-methylene-5,6,7,8-tetrahydrofolate + NH4(+). Its function is as follows. The glycine cleavage system catalyzes the degradation of glycine. The polypeptide is Aminomethyltransferase (Desulforamulus reducens (strain ATCC BAA-1160 / DSM 100696 / MI-1) (Desulfotomaculum reducens)).